A 2183-amino-acid polypeptide reads, in one-letter code: Coagulation factor V (2183 aa).

Positions 1-19 (MLLVCPCFFLLVVLGTRWA) are cleaved as a signal peptide. Plastocyanin-like domains are found at residues 30-192 (QLRQ…LLIC), 202-328 (TQKM…IKNC), 347-524 (KRWE…LLIC), and 534-682 (VQRV…DVKC). F5/8 type A domains are found at residues 30–328 (QLRQ…IKNC) and 347–682 (KRWE…DVKC). Residues Asp-138 and Asp-139 each coordinate Ca(2+). Asn-176, Asn-238, and Asn-381 each carry an N-linked (GlcNAc...) asparagine glycan. Thr-638 is modified (phosphothreonine). The interval 691 to 1533 (SYEIYEPPAP…PDTIAAWYLR (843 aa)) is b. Residues Tyr-692 and Tyr-725 each carry the sulfotyrosine modification. Residues 737-1533 (SFKNSSLNPE…PDTIAAWYLR (797 aa)) constitute a propeptide, activation peptide (connecting region). Residue Asn-841 is glycosylated (N-linked (GlcNAc...) asparagine). Disordered stretches follow at residues 884-904 (PAGK…MKSE), 947-1045 (DVDK…FPDR), and 1059-1144 (ETAL…YDLS). The tract at residues 892-908 (SNPKNSYSGMKSEEDIP) is 1 X 17 AA tandem repeats. One copy of the 1-1 repeat lies at 892 to 911 (SNPKNSYSGMKSEEDIPSEL). At Ser-903 the chain carries Phosphoserine. Polar residues predominate over residues 951 to 975 (LTNSPQNQNITVPRGESTSHTNTTR). N-linked (GlcNAc...) asparagine glycosylation is found at Asn-959 and Asn-972. Basic residues predominate over residues 1010–1021 (RTRKKKKNKKLA). Polar residues-rich tracts occupy residues 1059–1099 (ETAL…SLDL) and 1120–1134 (THST…SPPE). 32 repeat units span residues 1175 to 1183 (IPSSDLSLF), 1184 to 1192 (TISPELDQT), 1193 to 1201 (IIYPDLDQL), 1202 to 1210 (LLSPEDNQK), 1211 to 1219 (TSSPDLGQV), 1220 to 1228 (PLSPDDNQK), 1229 to 1237 (TSSPDLGQV), 1238 to 1246 (SLSPDDNQK), 1247 to 1255 (TSSPDLGQV), 1256 to 1264 (PLSLDDNQK), 1265 to 1273 (TTSPDLGQV), 1274 to 1282 (PLSPDDNQM), 1283 to 1291 (ITSPDLGQV), 1292 to 1299 (PLSSDNQK), 1300 to 1308 (TSSPDLGQV), 1309 to 1316 (PLFPEDNQ), 1317 to 1325 (NYFLDLSQV), 1326 to 1334 (PLSSDQNQE), 1335 to 1341 (TSSTDLL), 1342 to 1350 (TLSPDFGQT), 1351 to 1359 (VLSPDLDQL), 1360 to 1368 (PLPSDNSQV), 1369 to 1377 (TVSPDLSLL), 1378 to 1386 (TLSPDFNEI), 1387 to 1395 (ILAPDLGQV), 1396 to 1404 (TLSPDLIQT), 1405 to 1413 (NPALNHGHK), 1414 to 1422 (ASSADPDQA), 1423 to 1431 (SYPPDSGQA), 1432 to 1440 (SSLPELNRT), 1441 to 1449 (LPHPDLTHI), and 1452 to 1461 (PSPSPTLNNT). The tract at residues 1175 to 1461 (IPSSDLSLFT…PSPSPTLNNT (287 aa)) is 32 X 9 AA approximate tandem repeats of [TNP]-L-S-P-D-L-S-Q-T. The interval 1204 to 1312 (SPEDNQKTSS…PDLGQVPLFP (109 aa)) is disordered. A compositionally biased stretch (polar residues) spans 1228–1251 (KTSSPDLGQVSLSPDDNQKTSSPD). Residues 1292–1304 (PLSSDNQKTSSPD) are compositionally biased toward polar residues. The segment at 1403–1462 (QTNPALNHGHKASSADPDQASYPPDSGQASSLPELNRTLPHPDLTHIPPPSPSPTLNNTS) is disordered. The N-linked (GlcNAc...) asparagine glycan is linked to Asn-1438. Plastocyanin-like domains lie at 1538–1711 (HKKF…LLIC) and 1721–1866 (NLPM…DKEC). One can recognise an F5/8 type A 3 domain in the interval 1538-1866 (HKKFYYIAAE…TPFLIIDKEC (329 aa)). Positions 1802 and 1804 each coordinate Cu cation. A glycan (N-linked (GlcNAc...) asparagine) is linked at Asn-1811. F5/8 type C domains lie at 1866–2020 (CKMP…LQGC) and 2025–2180 (CSTP…LFGC). 2 disulfides stabilise this stretch: Cys-1866-Cys-2020 and Cys-2025-Cys-2180.

Belongs to the multicopper oxidase family. As to quaternary structure, factor Va, the activated form of factor V, is composed of a heavy chain and a light chain, non-covalently bound. The interaction between the two chains is calcium-dependent. Forms heterodimer with SERPINA5. Post-translationally, thrombin activates factor V proteolytically to the active cofactor, factor Va (formation of a heavy chain at the N-terminus and a light chain at the C-terminus). In terms of processing, sulfation is required for efficient thrombin cleavage and activation and for full procoagulant activity. Activated protein C inactivates factor V and factor Va by proteolytic degradation.

It localises to the secreted. Its activity is regulated as follows. Inhibited by SERPINA5. Central regulator of hemostasis. It serves as a critical cofactor for the prothrombinase activity of factor Xa that results in the activation of prothrombin to thrombin. This Mus musculus (Mouse) protein is Coagulation factor V (F5).